The chain runs to 355 residues: MSGQGKRLMVMAGGTGGHVFPGLAVAHHLMAQGWQVRWLGTADRMEADLVPKHGIEIDFIRISGLRGKGIKALIAAPLRIFNAWRQARAIMKAYKPDVVLGMGGYVSGPGGLAAWSLGIPVVLHEQNGIAGLTNKWLAKIATKVMQAFPGAFPNAEVVGNPVRTDVLALPLPQQRLAGREGPVRVLVVGGSQGARILNQTMPQVAAKLGDSVTIWHQSGKGSQQSVEQAYAEAGQPQHKVTEFIDDMAAAYAWADVVVCRSGALTVSEIAAAGLPALFVPFQHKDRQQYWNALPLEKAGAAKIIEQPQLSVDAVANTLAGWSRETLLTMAERARAASIPDATERVANEVSRAARA.

Residues 15-17 (TGG), Asn127, Arg163, Ser191, Ile244, 263-268 (ALTVSE), and Gln288 each bind UDP-N-acetyl-alpha-D-glucosamine.

This sequence belongs to the glycosyltransferase 28 family. MurG subfamily.

It is found in the cell inner membrane. It carries out the reaction di-trans,octa-cis-undecaprenyl diphospho-N-acetyl-alpha-D-muramoyl-L-alanyl-D-glutamyl-meso-2,6-diaminopimeloyl-D-alanyl-D-alanine + UDP-N-acetyl-alpha-D-glucosamine = di-trans,octa-cis-undecaprenyl diphospho-[N-acetyl-alpha-D-glucosaminyl-(1-&gt;4)]-N-acetyl-alpha-D-muramoyl-L-alanyl-D-glutamyl-meso-2,6-diaminopimeloyl-D-alanyl-D-alanine + UDP + H(+). Its pathway is cell wall biogenesis; peptidoglycan biosynthesis. In terms of biological role, cell wall formation. Catalyzes the transfer of a GlcNAc subunit on undecaprenyl-pyrophosphoryl-MurNAc-pentapeptide (lipid intermediate I) to form undecaprenyl-pyrophosphoryl-MurNAc-(pentapeptide)GlcNAc (lipid intermediate II). This chain is UDP-N-acetylglucosamine--N-acetylmuramyl-(pentapeptide) pyrophosphoryl-undecaprenol N-acetylglucosamine transferase, found in Escherichia coli O139:H28 (strain E24377A / ETEC).